The chain runs to 334 residues: S-adenosylmethionine:tRNA ribosyltransferase-isomerase (334 aa).

This sequence belongs to the QueA family. In terms of assembly, monomer.

The protein localises to the cytoplasm. The enzyme catalyses 7-aminomethyl-7-carbaguanosine(34) in tRNA + S-adenosyl-L-methionine = epoxyqueuosine(34) in tRNA + adenine + L-methionine + 2 H(+). Its pathway is tRNA modification; tRNA-queuosine biosynthesis. Transfers and isomerizes the ribose moiety from AdoMet to the 7-aminomethyl group of 7-deazaguanine (preQ1-tRNA) to give epoxyqueuosine (oQ-tRNA). The chain is S-adenosylmethionine:tRNA ribosyltransferase-isomerase from Rubrobacter xylanophilus (strain DSM 9941 / JCM 11954 / NBRC 16129 / PRD-1).